Here is a 187-residue protein sequence, read N- to C-terminus: Large ribosomal subunit protein mL49 (187 aa).

This sequence belongs to the mitochondrion-specific ribosomal protein mL49 family.

The protein resides in the mitochondrion. In Caenorhabditis elegans, this protein is Large ribosomal subunit protein mL49 (mrpl-49).